The following is a 354-amino-acid chain: GTPase Obg (354 aa).

One can recognise an Obg domain in the interval 1 to 159 (MKFLDQCKIY…LWVWLRLKLI (159 aa)). The OBG-type G domain occupies 160 to 328 (ADVGLVGLPN…LLRAAFTQVR (169 aa)). Residues 166-173 (GLPNAGKS), 191-195 (FTTLT), 213-216 (DIPG), 280-283 (NKVD), and 309-311 (SGV) each bind GTP. Mg(2+) is bound by residues Ser173 and Thr193. The tract at residues 333 to 354 (ETPAEAAIDEAPEEETPGGWQP) is disordered. The segment covering 339-348 (AIDEAPEEET) has biased composition (acidic residues).

Belongs to the TRAFAC class OBG-HflX-like GTPase superfamily. OBG GTPase family. As to quaternary structure, monomer. It depends on Mg(2+) as a cofactor.

The protein resides in the cytoplasm. Functionally, an essential GTPase which binds GTP, GDP and possibly (p)ppGpp with moderate affinity, with high nucleotide exchange rates and a fairly low GTP hydrolysis rate. Plays a role in control of the cell cycle, stress response, ribosome biogenesis and in those bacteria that undergo differentiation, in morphogenesis control. In Caulobacter sp. (strain K31), this protein is GTPase Obg.